The primary structure comprises 263 residues: Endonuclease 8 (263 aa).

Proline 2 (schiff-base intermediate with DNA) is an active-site residue. Glutamate 3 functions as the Proton donor in the catalytic mechanism. The Proton donor; for beta-elimination activity role is filled by lysine 53. Residues glutamine 70, arginine 125, and asparagine 169 each contribute to the DNA site. An FPG-type zinc finger spans residues 229-263 (KVFHRDGEACERCGGIIEKTTLSSRPFYWCPHCQK). Arginine 253 functions as the Proton donor; for delta-elimination activity in the catalytic mechanism.

Belongs to the FPG family. Zn(2+) is required as a cofactor.

The enzyme catalyses 2'-deoxyribonucleotide-(2'-deoxyribose 5'-phosphate)-2'-deoxyribonucleotide-DNA = a 3'-end 2'-deoxyribonucleotide-(2,3-dehydro-2,3-deoxyribose 5'-phosphate)-DNA + a 5'-end 5'-phospho-2'-deoxyribonucleoside-DNA + H(+). Functionally, involved in base excision repair of DNA damaged by oxidation or by mutagenic agents. Acts as a DNA glycosylase that recognizes and removes damaged bases. Has a preference for oxidized pyrimidines, such as thymine glycol, 5,6-dihydrouracil and 5,6-dihydrothymine. Has AP (apurinic/apyrimidinic) lyase activity and introduces nicks in the DNA strand. Cleaves the DNA backbone by beta-delta elimination to generate a single-strand break at the site of the removed base with both 3'- and 5'-phosphates. The protein is Endonuclease 8 of Salmonella paratyphi A (strain AKU_12601).